The primary structure comprises 61 residues: Small ribosomal subunit protein uS14 (61 aa).

4 residues coordinate Zn(2+): cysteine 24, cysteine 27, cysteine 40, and cysteine 43.

This sequence belongs to the universal ribosomal protein uS14 family. Zinc-binding uS14 subfamily. In terms of assembly, part of the 30S ribosomal subunit. Contacts proteins S3 and S10. Zn(2+) is required as a cofactor.

Binds 16S rRNA, required for the assembly of 30S particles and may also be responsible for determining the conformation of the 16S rRNA at the A site. The polypeptide is Small ribosomal subunit protein uS14 (Streptococcus thermophilus (strain ATCC BAA-491 / LMD-9)).